A 638-amino-acid polypeptide reads, in one-letter code: Threonine--tRNA ligase (638 aa).

A TGS domain is found at 1 to 59; that stretch reads MEKIKVKIKGKEYEVEKGTPLGKIFELAGIKDALGGVINGKIIDLQTPVRESGEIKPVY. Positions 243–536 are catalytic; it reads DHRRLGKELE…LLEHYAGLLP (294 aa). Cys336, His387, and His513 together coordinate Zn(2+).

This sequence belongs to the class-II aminoacyl-tRNA synthetase family. As to quaternary structure, homodimer. Requires Zn(2+) as cofactor.

Its subcellular location is the cytoplasm. It carries out the reaction tRNA(Thr) + L-threonine + ATP = L-threonyl-tRNA(Thr) + AMP + diphosphate + H(+). Catalyzes the attachment of threonine to tRNA(Thr) in a two-step reaction: L-threonine is first activated by ATP to form Thr-AMP and then transferred to the acceptor end of tRNA(Thr). Also edits incorrectly charged L-seryl-tRNA(Thr). In Aquifex aeolicus (strain VF5), this protein is Threonine--tRNA ligase.